Consider the following 548-residue polypeptide: Pentatricopeptide repeat-containing protein At1g62680, mitochondrial (548 aa).

The transit peptide at 1-43 (MQRSIAMTAKRFLHRNLLENGKPRTASSPSFSHCSSCRCWVRA) directs the protein to the mitochondrion. PPR repeat units lie at residues 84 to 118 (SIVDFNRLLSAIVKLKKYDVVISLGKKMEVLGIRN), 119 to 153 (DLYTFNIVINCFCCCFQVSLALSILGKMLKLGYEP), 154 to 188 (DRVTIGSLVNGFCRRNRVSDAVSLVDKMVEIGYKP), 189 to 223 (DIVAYNAIIDSLCKTKRVNDAFDFFKEIERKGIRP), 224 to 258 (NVVTYTALVNGLCNSSRWSDAARLLSDMIKKKITP), 259 to 293 (NVITYSALLDAFVKNGKVLEAKELFEEMVRMSIDP), 294 to 328 (DIVTYSSLINGLCLHDRIDEANQMFDLMVSKGCLA), 329 to 363 (DVVSYNTLINGFCKAKRVEDGMKLFREMSQRGLVS), 364 to 398 (NTVTYNTLIQGFFQAGDVDKAQEFFSQMDFFGISP), 399 to 433 (DIWTYNILLGGLCDNGELEKALVIFEDMQKREMDL), 434 to 468 (DIVTYTTVIRGMCKTGKVEEAWSLFCSLSLKGLKP), and 469 to 503 (DIVTYTTMMSGLCTKGLLHEVEALYTKMKQEGLMK).

The protein belongs to the PPR family. P subfamily.

Its subcellular location is the mitochondrion. This Arabidopsis thaliana (Mouse-ear cress) protein is Pentatricopeptide repeat-containing protein At1g62680, mitochondrial.